Reading from the N-terminus, the 934-residue chain is Bifunctional uridylyltransferase/uridylyl-removing enzyme (934 aa).

A uridylyltransferase region spans residues 1 to 379; it reads MSAHDLKLEE…TFSRRKRKLS (379 aa). Residues 380–736 form a uridylyl-removing region; it reads DDGAFISENH…AKPHAFEAVT (357 aa). The 118-residue stretch at 496 to 613 folds into the HD domain; it reads VDEHLLRCIA…IDFADTVQTM (118 aa). ACT domains lie at 737-818 and 848-931; these read EITV…DMLA and VIEV…RSPQ.

Belongs to the GlnD family. Mg(2+) serves as cofactor.

The enzyme catalyses [protein-PII]-L-tyrosine + UTP = [protein-PII]-uridylyl-L-tyrosine + diphosphate. The catalysed reaction is [protein-PII]-uridylyl-L-tyrosine + H2O = [protein-PII]-L-tyrosine + UMP + H(+). Uridylyltransferase (UTase) activity is inhibited by glutamine, while glutamine activates uridylyl-removing (UR) activity. In terms of biological role, modifies, by uridylylation and deuridylylation, the PII regulatory proteins (GlnB and homologs), in response to the nitrogen status of the cell that GlnD senses through the glutamine level. Under low glutamine levels, catalyzes the conversion of the PII proteins and UTP to PII-UMP and PPi, while under higher glutamine levels, GlnD hydrolyzes PII-UMP to PII and UMP (deuridylylation). Thus, controls uridylylation state and activity of the PII proteins, and plays an important role in the regulation of nitrogen assimilation and metabolism. This Brucella suis biovar 1 (strain 1330) protein is Bifunctional uridylyltransferase/uridylyl-removing enzyme.